Here is a 466-residue protein sequence, read N- to C-terminus: ATP-dependent protease ATPase subunit HslU (466 aa).

ATP is bound by residues Ile-18, 60–65, Asp-279, Glu-344, and Arg-416; that span reads GVGKTE.

Belongs to the ClpX chaperone family. HslU subfamily. A double ring-shaped homohexamer of HslV is capped on each side by a ring-shaped HslU homohexamer. The assembly of the HslU/HslV complex is dependent on binding of ATP.

The protein localises to the cytoplasm. Its function is as follows. ATPase subunit of a proteasome-like degradation complex; this subunit has chaperone activity. The binding of ATP and its subsequent hydrolysis by HslU are essential for unfolding of protein substrates subsequently hydrolyzed by HslV. HslU recognizes the N-terminal part of its protein substrates and unfolds these before they are guided to HslV for hydrolysis. This chain is ATP-dependent protease ATPase subunit HslU, found in Syntrophomonas wolfei subsp. wolfei (strain DSM 2245B / Goettingen).